Here is a 165-residue protein sequence, read N- to C-terminus: uncharacterized protein (165 aa).

A coiled-coil region spans residues 1-38; that stretch reads MFTVKEKNRQELEEELNDLEFQIYRMQENMKDLSKDAK.

This is an uncharacterized protein from Bacillus subtilis (strain 168).